Consider the following 636-residue polypeptide: Cysteine-rich receptor-like protein kinase 24 (636 aa).

The signal sequence occupies residues 1–20 (MVKFLVIFWFVVISFSHVSA). Gnk2-homologous domains follow at residues 21–124 (QVCL…NRSF) and 130–235 (MEIL…LYPF). The Extracellular portion of the chain corresponds to 21-254 (QVCLERSGFF…RQKDGKSIST (234 aa)). N-linked (GlcNAc...) asparagine glycosylation is found at asparagine 33, asparagine 50, asparagine 98, asparagine 101, asparagine 121, asparagine 137, asparagine 145, and asparagine 197. The chain crosses the membrane as a helical span at residues 255 to 275 (GAIVAIIVVPILLLALGVGLW). Over 276–636 (KRRKAYKTKT…SVSVTCVSPR (361 aa)) the chain is Cytoplasmic. A Protein kinase domain is found at 312-585 (FHNVNKLGHG…TMSTVFHMLT (274 aa)). ATP is bound by residues 318-326 (LGHGGFGEV) and lysine 340. The active-site Proton acceptor is aspartate 437.

This sequence belongs to the protein kinase superfamily. Ser/Thr protein kinase family. CRK subfamily.

It localises to the membrane. The catalysed reaction is L-seryl-[protein] + ATP = O-phospho-L-seryl-[protein] + ADP + H(+). The enzyme catalyses L-threonyl-[protein] + ATP = O-phospho-L-threonyl-[protein] + ADP + H(+). The sequence is that of Cysteine-rich receptor-like protein kinase 24 (CRK24) from Arabidopsis thaliana (Mouse-ear cress).